The following is a 207-amino-acid chain: UPF0126 inner membrane protein YadS (207 aa).

A helical membrane pass occupies residues 1 to 21 (MLVYWLDIVGTAVFAISGVLL). Residues 22–29 (AGKLRMDP) lie on the Cytoplasmic side of the membrane. A helical transmembrane segment spans residues 30-50 (FGVLVLGVVTAVGGGTIRDMA). At 51–58 (LDHGPVFW) the chain is on the periplasmic side. The chain crosses the membrane as a helical span at residues 59 to 79 (VKDPTDLVVAMVTSMLTIVLV). The Cytoplasmic segment spans residues 80–85 (RQPRRL). Residues 86 to 106 (PKWMLPVLDAVGLAVFVGIGV) form a helical membrane-spanning segment. Over 107–112 (NKAFNA) the chain is Periplasmic. A helical transmembrane segment spans residues 113-133 (EAGPLIAVCMGVITGVGGGII). Residues 134–148 (RDVLAREIPMILRTE) are Cytoplasmic-facing. The helical transmembrane segment at 149-169 (IYATACIIGGIVHATAYYTFS) threads the bilayer. Position 170 (Val170) is a topological domain, periplasmic. The helical transmembrane segment at 171–191 (PLETASMMGMVVTLLIRLAAI) threads the bilayer. The Cytoplasmic portion of the chain corresponds to 192–207 (RWHLKLPTFALDENGR).

It belongs to the UPF0126 family.

It localises to the cell inner membrane. The sequence is that of UPF0126 inner membrane protein YadS (yadS) from Escherichia coli O6:H1 (strain CFT073 / ATCC 700928 / UPEC).